Here is a 468-residue protein sequence, read N- to C-terminus: Probable Xaa-Pro aminopeptidase PEPP (468 aa).

Positions 264, 275, 398, and 438 each coordinate Mn(2+).

The protein belongs to the peptidase M24B family. The cofactor is Mn(2+).

The catalysed reaction is Release of any N-terminal amino acid, including proline, that is linked to proline, even from a dipeptide or tripeptide.. Catalyzes the removal of a penultimate prolyl residue from the N-termini of peptides. The chain is Probable Xaa-Pro aminopeptidase PEPP (PEPP) from Paracoccidioides brasiliensis (strain Pb03).